A 313-amino-acid polypeptide reads, in one-letter code: Dimethyladenosine transferase (313 aa).

Residues 1-21 are disordered; the sequence is MPKVKSGAIGRRRGRQEQRRE. His-37, Leu-39, Gly-64, Glu-85, Asp-113, and Asn-128 together coordinate S-adenosyl-L-methionine.

It belongs to the class I-like SAM-binding methyltransferase superfamily. rRNA adenine N(6)-methyltransferase family. In terms of assembly, part of the small subunit (SSU) processome, composed of more than 70 proteins and the RNA chaperone small nucleolar RNA (snoRNA) U3.

The protein localises to the nucleus. The protein resides in the nucleoplasm. It is found in the nucleolus. The enzyme catalyses adenosine(1779)/adenosine(1780) in 18S rRNA + 4 S-adenosyl-L-methionine = N(6)-dimethyladenosine(1779)/N(6)-dimethyladenosine(1780) in 18S rRNA + 4 S-adenosyl-L-homocysteine + 4 H(+). Specifically dimethylates two adjacent adenosines in the loop of a conserved hairpin near the 3'-end of 18S rRNA in the 40S particle. Involved in the pre-rRNA processing steps leading to small-subunit rRNA production independently of its RNA-modifying catalytic activity. Part of the small subunit (SSU) processome, first precursor of the small eukaryotic ribosomal subunit. During the assembly of the SSU processome in the nucleolus, many ribosome biogenesis factors, an RNA chaperone and ribosomal proteins associate with the nascent pre-rRNA and work in concert to generate RNA folding, modifications, rearrangements and cleavage as well as targeted degradation of pre-ribosomal RNA by the RNA exosome. The polypeptide is Dimethyladenosine transferase (DIMT1) (Macaca fascicularis (Crab-eating macaque)).